The chain runs to 532 residues: BTB/POZ domain-containing protein 3 (532 aa).

Positions 23–54 (KNRSKKSSKKTNTGGGGGGSSSSSSSSSNSKL) are disordered. The span at 43-53 (SSSSSSSSNSK) shows a compositional bias: low complexity. One can recognise a BTB domain in the interval 130 to 200 (ADVHFVVGPP…IYCDEIDLAA (71 aa)). The region spanning 245–310 (FEEPDLTQRC…NWAEVECQRQ (66 aa)) is the BACK domain.

As to expression, expressed in visual cortex. Expressed in visual cortex layer IV neurons.

It localises to the cytoplasm. The protein resides in the cytosol. Its subcellular location is the nucleus. Functionally, acts as a key regulator of dendritic field orientation during development of sensory cortex. Also directs dendrites toward active axon terminals when ectopically expressed. In Mustela putorius furo (European domestic ferret), this protein is BTB/POZ domain-containing protein 3 (BTBD3).